Here is a 262-residue protein sequence, read N- to C-terminus: Adenosylcobinamide-GDP ribazoletransferase (262 aa).

The next 8 helical transmembrane spans lie at 4–26 (AWNG…SIAW), 37–57 (CMPL…ALFS), 59–79 (FSFS…IWMA), 112–132 (VGAF…LFLY), 139–159 (IPPA…AWLL), 183–203 (AIWA…STAI), 205–225 (VQTG…AKPW), and 237–257 (VLGA…WLLH).

Belongs to the CobS family. Mg(2+) is required as a cofactor.

The protein resides in the cell membrane. The enzyme catalyses alpha-ribazole + adenosylcob(III)inamide-GDP = adenosylcob(III)alamin + GMP + H(+). The catalysed reaction is alpha-ribazole 5'-phosphate + adenosylcob(III)inamide-GDP = adenosylcob(III)alamin 5'-phosphate + GMP + H(+). The protein operates within cofactor biosynthesis; adenosylcobalamin biosynthesis; adenosylcobalamin from cob(II)yrinate a,c-diamide: step 7/7. Joins adenosylcobinamide-GDP and alpha-ribazole to generate adenosylcobalamin (Ado-cobalamin). Also synthesizes adenosylcobalamin 5'-phosphate from adenosylcobinamide-GDP and alpha-ribazole 5'-phosphate. The polypeptide is Adenosylcobinamide-GDP ribazoletransferase (Geobacillus kaustophilus (strain HTA426)).